Reading from the N-terminus, the 125-residue chain is Large ribosomal subunit protein eL8 (125 aa).

The protein belongs to the eukaryotic ribosomal protein eL8 family. As to quaternary structure, part of the 50S ribosomal subunit. Probably part of the RNase P complex.

The protein resides in the cytoplasm. Its function is as follows. Multifunctional RNA-binding protein that recognizes the K-turn motif in ribosomal RNA, the RNA component of RNase P, box H/ACA, box C/D and box C'/D' sRNAs. The protein is Large ribosomal subunit protein eL8 of Metallosphaera sedula (strain ATCC 51363 / DSM 5348 / JCM 9185 / NBRC 15509 / TH2).